We begin with the raw amino-acid sequence, 605 residues long: Anaerobic ribonucleoside-triphosphate reductase (605 aa).

Residues His64 and His66 each contribute to the dCTP site. DGTP-binding residues include His64, His66, Asp67, Glu100, and Lys103. DCTP contacts are provided by residues Glu100, Lys103, Gln114, Lys146, and 445 to 448 (AENL). The dATP site is built by Glu100, Lys103, Gln114, and Lys146. Glu100 is a binding site for dTTP. Positions 114 and 146 each coordinate dTTP. The dGTP site is built by Lys146, Asn447, and Leu448. Positions 482-605 (ENITPFEKIS…KEIMHRVKHQ (124 aa)) constitute a Glycine radical domain. 4 residues coordinate Zn(2+): Cys543, Cys546, Cys561, and Cys564. Gly580 is modified (glycine radical).

The protein belongs to the anaerobic ribonucleoside-triphosphate reductase family. As to quaternary structure, homodimer. Forms a tetramer composed of two NrdD and two NrdG subunits.

It catalyses the reaction a ribonucleoside 5'-triphosphate + formate + H(+) = a 2'-deoxyribonucleoside 5'-triphosphate + CO2 + H2O. Its activity is regulated as follows. Activated under anaerobic conditions by NrdG, a tightly associated activase. Activation involves the formation of a glycyl radical at Gly-580. Catalyzes the conversion of ribonucleotides into deoxyribonucleotides, which are required for DNA synthesis and repair. The chain is Anaerobic ribonucleoside-triphosphate reductase from Enterobacteria phage T4 (Bacteriophage T4).